The following is a 4687-amino-acid chain: Plectin (4687 aa).

Residues M1 to Y1473 form a globular 1 region. Residue R21 is modified to Phosphoserine. V26 is subject to Phosphotyrosine. The disordered stretch occupies residues R111–T158. Over residues D137 to G154 the composition is skewed to basic and acidic residues. Residues D181–P406 form an actin-binding region. Calponin-homology (CH) domains follow at residues R185–K288 and M301–P406. The stretch at L648–L722 is one Spectrin 1 repeat. S723 is modified (phosphoserine). Spectrin repeat units lie at residues K743–H827 and L840–Q933. At T818 the chain carries Phosphothreonine. Residues R944–P1001 form the SH3 domain. At S1050 the chain carries Phosphoserine. The stretch at R1318–A1418 is one Spectrin 4 repeat. Position 1438 is a phosphoserine (S1438). Coiled-coil stretches lie at residues Q1472–L1692 and S1724–A2760. The segment at I1474–S2758 is central fibrous rod domain. The disordered stretch occupies residues E1623–S1647. S1724 carries the post-translational modification Phosphoserine. Residue K1728 is modified to N6-acetyllysine. Disordered stretches follow at residues V1741–R1764, S1796–Q1846, E2096–E2139, L2164–Q2188, and R2218–M2307. Composition is skewed to basic and acidic residues over residues D1801–Q1839, E2096–R2111, and E2119–Q2131. Positions A2173–A2182 are enriched in low complexity. Over residues R2218–A2261 the composition is skewed to basic and acidic residues. A compositionally biased stretch (low complexity) spans E2262–A2275. The span at E2276–Q2291 shows a compositional bias: basic and acidic residues. Phosphoserine is present on S2634. N6-acetyllysine is present on K2639. The interval Q2671–Q2710 is disordered. Residues E2682 to Q2710 show a composition bias toward basic and acidic residues. The globular 2 stretch occupies residues Q2759 to A4687. Phosphoserine is present on S2777. Residue Y2784 is modified to Phosphotyrosine. Plectin repeat units follow at residues Q2791–V2828, R2829–A2866, L2867–H2904, H2905–G2942, I2943–N2980, and A2984–G3018. S2805 is subject to Phosphoserine. T2889 is modified (phosphothreonine). Phosphotyrosine is present on Y3036. 2 positions are modified to N6-acetyllysine: K3056 and K3094. Plectin repeat units lie at residues A3119–V3156, R3157–A3194, V3195–H3232, E3233–G3270, L3271–N3308, and L3311–G3346. Y3365 is modified (phosphotyrosine). K3423 carries the post-translational modification N6-acetyllysine. Plectin repeat units lie at residues R3488–A3525, T3526–H3563, E3564–A3601, I3602–N3639, and A3643–G3677. S3583 is modified (phosphoserine). T3788 is subject to Phosphothreonine. Phosphotyrosine is present on Y3793. Plectin repeat units follow at residues W3823 to A3860, R3861 to H3898, D3899 to A3936, L3937 to H3974, and S3978 to G4011. Phosphothreonine is present on T4033. A Phosphoserine modification is found at S4057. Plectin repeat units lie at residues Q4066–A4103, F4104–K4141, D4142–G4179, I4180–N4217, T4221–G4255, and R4268–Y4308. The interval Q4253–I4303 is binding to intermediate filaments. Phosphoserine occurs at positions 4385, 4387, 4388, 4389, 4392, 4393, 4394, and 4395. Y4396 carries the phosphotyrosine modification. Phosphoserine is present on residues S4399 and S4409. Plectin repeat units lie at residues S4411 to G4448, Q4449 to V4486, D4487 to G4524, Q4525 to A4562, and Q4563 to G4600. T4414 bears the Phosphothreonine mark. The residue at position 4542 (T4542) is a Phosphothreonine; by CDK1. 2 positions are modified to phosphoserine: S4610 and S4616. Low complexity predominate over residues Y4614–G4674. The segment at Y4614 to A4687 is disordered. The residue at position 4618 (Y4618) is a Phosphotyrosine. A phosphoserine mark is found at S4619, S4621, and S4625. Residue T4626 is modified to Phosphothreonine. The 4 X 4 AA tandem repeats of G-S-R-X stretch occupies residues G4628–R4643. Phosphoserine is present on S4629. 2 positions are modified to omega-N-methylarginine: R4630 and R4643. Phosphoserine occurs at positions 4645 and 4678.

The protein belongs to the plakin or cytolinker family. Homodimer or homotetramer. Interacts (via actin-binding domain) with SYNE3. Interacts (via calponin-homology (CH) 1 domain) with VIM (via rod region). Interacts (via N-terminus) with DST isoform 2 (via N-terminus). Interacts with FER. Interacts with TOR1A. Interacts with ANK3. Identified in complexes that contain VIM, EZR, AHNAK, BFSP1, BFSP2, ANK2, PLEC, PRX and spectrin. Post-translationally, phosphorylated by CDK1; regulates dissociation from intermediate filaments during mitosis. Isoform 2 is phosphorylated on Ser-21 and Tyr-26. As to expression, widely expressed with highest expression in skeletal muscle and lowest in thymus.

It is found in the cytoplasm. The protein resides in the cytoskeleton. It localises to the cell junction. Its subcellular location is the hemidesmosome. The protein localises to the cell projection. It is found in the podosome. Functionally, interlinks intermediate filaments with microtubules and microfilaments and anchors intermediate filaments to desmosomes or hemidesmosomes. May be involved not only in the cross-linking and stabilization of cytoskeletal intermediate filaments network, but also in the regulation of their dynamics. In Rattus norvegicus (Rat), this protein is Plectin (Plec).